The sequence spans 544 residues: CTP synthase (544 aa).

The interval 1–265 is amidoligase domain; sequence MTKFIFVTGG…DNIITEQLQL (265 aa). Residue S13 participates in CTP binding. S13 contributes to the UTP binding site. ATP is bound by residues 14–19 and D71; that span reads SLGKGI. Residues D71 and E139 each contribute to the Mg(2+) site. CTP-binding positions include 146 to 148, 186 to 191, and K222; these read DIE and KTKPTQ. UTP contacts are provided by residues 186–191 and K222; that span reads KTKPTQ. The Glutamine amidotransferase type-1 domain maps to 290 to 544; that stretch reads KIAMVGKYVD…VKAALNNKKA (255 aa). G353 contacts L-glutamine. Residue C380 is the Nucleophile; for glutamine hydrolysis of the active site. Residues 381–384, E404, and R471 each bind L-glutamine; that span reads LGMQ. Active-site residues include H517 and E519.

It belongs to the CTP synthase family. Homotetramer.

The enzyme catalyses UTP + L-glutamine + ATP + H2O = CTP + L-glutamate + ADP + phosphate + 2 H(+). It catalyses the reaction L-glutamine + H2O = L-glutamate + NH4(+). The catalysed reaction is UTP + NH4(+) + ATP = CTP + ADP + phosphate + 2 H(+). The protein operates within pyrimidine metabolism; CTP biosynthesis via de novo pathway; CTP from UDP: step 2/2. Allosterically activated by GTP, when glutamine is the substrate; GTP has no effect on the reaction when ammonia is the substrate. The allosteric effector GTP functions by stabilizing the protein conformation that binds the tetrahedral intermediate(s) formed during glutamine hydrolysis. Inhibited by the product CTP, via allosteric rather than competitive inhibition. Functionally, catalyzes the ATP-dependent amination of UTP to CTP with either L-glutamine or ammonia as the source of nitrogen. Regulates intracellular CTP levels through interactions with the four ribonucleotide triphosphates. The protein is CTP synthase of Neisseria meningitidis serogroup C / serotype 2a (strain ATCC 700532 / DSM 15464 / FAM18).